We begin with the raw amino-acid sequence, 241 residues long: Parkin coregulated gene protein homolog (241 aa).

As to quaternary structure, microtubule inner protein component of sperm flagellar doublet microtubules. Forms a large molecular chaperone complex containing heat shock proteins 70 and 90 and chaperonin components. Interacts with STIP1, PRKN, GPR37, HSPA8, TCP1/CCT1, CCT2, CCT3, CCT4, CCT5, CCT6A, CCT7 and CCT8. Interacts with MEIG1.

It is found in the cytoplasm. It localises to the cytoskeleton. Its subcellular location is the cilium axoneme. The protein resides in the flagellum axoneme. Microtubule inner protein (MIP) part of the dynein-decorated doublet microtubules (DMTs) in cilia axoneme, which is required for motile cilia beating. Suppresses cell death induced by accumulation of unfolded Pael receptor (Pael-R, a substrate of Parkin). Facilitates the formation of inclusions consisting of Pael-R, molecular chaperones, protein degradation molecules and itself when proteasome is inhibited. May play an important role in the formation of Lewy bodies and protection of dopaminergic neurons against Parkinson disease. The protein is Parkin coregulated gene protein homolog (Pacrg) of Mus musculus (Mouse).